The primary structure comprises 200 residues: Holliday junction branch migration complex subunit RuvA (200 aa).

Residues 1-63 (MFEYLTGLIT…EDAITLFGFA (63 aa)) are domain I. The interval 64–142 (TQAEKRLFTQ…AVQDEVQLDF (79 aa)) is domain II. Residues 143–151 (TAPGPLGPS) form a flexible linker region. Residues 151 to 200 (SAALQDALAALESLGYTTKQVERVQKQLEGLQGELSTNDYLSQGLKLLSR) are domain III.

The protein belongs to the RuvA family. Homotetramer. Forms an RuvA(8)-RuvB(12)-Holliday junction (HJ) complex. HJ DNA is sandwiched between 2 RuvA tetramers; dsDNA enters through RuvA and exits via RuvB. An RuvB hexamer assembles on each DNA strand where it exits the tetramer. Each RuvB hexamer is contacted by two RuvA subunits (via domain III) on 2 adjacent RuvB subunits; this complex drives branch migration. In the full resolvosome a probable DNA-RuvA(4)-RuvB(12)-RuvC(2) complex forms which resolves the HJ.

Its subcellular location is the cytoplasm. Functionally, the RuvA-RuvB-RuvC complex processes Holliday junction (HJ) DNA during genetic recombination and DNA repair, while the RuvA-RuvB complex plays an important role in the rescue of blocked DNA replication forks via replication fork reversal (RFR). RuvA specifically binds to HJ cruciform DNA, conferring on it an open structure. The RuvB hexamer acts as an ATP-dependent pump, pulling dsDNA into and through the RuvAB complex. HJ branch migration allows RuvC to scan DNA until it finds its consensus sequence, where it cleaves and resolves the cruciform DNA. The chain is Holliday junction branch migration complex subunit RuvA from Limosilactobacillus fermentum (strain NBRC 3956 / LMG 18251) (Lactobacillus fermentum).